We begin with the raw amino-acid sequence, 378 residues long: Dihydroorotate dehydrogenase (quinone) (378 aa).

Residues 77–81 (AGFDK) and Thr101 contribute to the FMN site. Lys81 lines the substrate pocket. Position 126-130 (126-130 (NRMGF)) interacts with substrate. Positions 158 and 191 each coordinate FMN. Asn191 is a substrate binding site. Ser194 serves as the catalytic Nucleophile. Asn196 is a binding site for substrate. FMN-binding residues include Lys229 and Thr257. Substrate is bound at residue 258-259 (NT). FMN-binding positions include Gly287, Gly316, and 337–338 (YT).

Belongs to the dihydroorotate dehydrogenase family. Type 2 subfamily. In terms of assembly, monomer. FMN is required as a cofactor.

Its subcellular location is the cell membrane. It carries out the reaction (S)-dihydroorotate + a quinone = orotate + a quinol. It participates in pyrimidine metabolism; UMP biosynthesis via de novo pathway; orotate from (S)-dihydroorotate (quinone route): step 1/1. Functionally, catalyzes the conversion of dihydroorotate to orotate with quinone as electron acceptor. The chain is Dihydroorotate dehydrogenase (quinone) from Synechococcus elongatus (strain ATCC 33912 / PCC 7942 / FACHB-805) (Anacystis nidulans R2).